Consider the following 586-residue polypeptide: NADH-quinone oxidoreductase subunit C/D 2 (586 aa).

The interval Met1–Glu173 is NADH dehydrogenase I subunit C. The segment at Ala197–Arg586 is NADH dehydrogenase I subunit D.

This sequence in the N-terminal section; belongs to the complex I 30 kDa subunit family. It in the C-terminal section; belongs to the complex I 49 kDa subunit family. In terms of assembly, NDH-1 is composed of 13 different subunits. Subunits NuoB, CD, E, F, and G constitute the peripheral sector of the complex.

It localises to the cell inner membrane. The catalysed reaction is a quinone + NADH + 5 H(+)(in) = a quinol + NAD(+) + 4 H(+)(out). In terms of biological role, NDH-1 shuttles electrons from NADH, via FMN and iron-sulfur (Fe-S) centers, to quinones in the respiratory chain. The immediate electron acceptor for the enzyme in this species is believed to be ubiquinone. Couples the redox reaction to proton translocation (for every two electrons transferred, four hydrogen ions are translocated across the cytoplasmic membrane), and thus conserves the redox energy in a proton gradient. The chain is NADH-quinone oxidoreductase subunit C/D 2 (nuoC2) from Aquifex aeolicus (strain VF5).